Here is a 529-residue protein sequence, read N- to C-terminus: Peptide chain release factor 3 (529 aa).

Positions 11-280 constitute a tr-type G domain; it reads AKRRTFAIIS…GLVEWAPAPM (270 aa). GTP-binding positions include 20-27, 88-92, and 142-145; these read SHPDAGKT, DTPGH, and NKLD.

Belongs to the TRAFAC class translation factor GTPase superfamily. Classic translation factor GTPase family. PrfC subfamily.

It is found in the cytoplasm. Its function is as follows. Increases the formation of ribosomal termination complexes and stimulates activities of RF-1 and RF-2. It binds guanine nucleotides and has strong preference for UGA stop codons. It may interact directly with the ribosome. The stimulation of RF-1 and RF-2 is significantly reduced by GTP and GDP, but not by GMP. In Klebsiella pneumoniae (strain 342), this protein is Peptide chain release factor 3.